Here is a 451-residue protein sequence, read N- to C-terminus: Protease RseP (451 aa).

Position 22 (histidine 22) interacts with Zn(2+). Residue glutamate 23 is part of the active site. Residue histidine 26 coordinates Zn(2+). Residues 98-120 traverse the membrane as a helical segment; that stretch reads AAIVSAGPIANFLFAIVAYWLVF. PDZ domains are found at residues 115–186 and 199–280; these read AYWL…APFG and QWQF…ERES. Transmembrane regions (helical) follow at residues 377-399 and 427-446; these read LVYY…LFPL and FSYR…ALFN.

Belongs to the peptidase M50B family. In terms of assembly, interacts with RseA. Zn(2+) serves as cofactor.

The protein localises to the cell inner membrane. Its function is as follows. A site-2 regulated intramembrane protease (S2P) that cleaves the peptide bond between 'Ala-108' and 'Cys-109' in the transmembrane region of RseA. Part of a regulated intramembrane proteolysis (RIP) cascade. Acts on DegS-cleaved RseA to release the cytoplasmic domain of RseA. This provides the cell with sigma-E (RpoE) activity through the proteolysis of RseA. This is Protease RseP (rseP) from Yersinia pestis.